An 889-amino-acid chain; its full sequence is Potassium/sodium hyperpolarization-activated cyclic nucleotide-gated channel 2 (889 aa).

The segment covering 1-10 (MDARGGGGRP) has biased composition (gly residues). The interval 1-159 (MDARGGGGRP…GPAGEPRGSQ (159 aa)) is disordered. At 1 to 215 (MDARGGGGRP…PYSDFRFYWD (215 aa)) the chain is on the cytoplasmic side. Positions 17-55 (TPAPGPPPPPPPAPPQQQPPPPPPPAPPPGPGPAPPQHP) are enriched in pro residues. Residues 129 to 155 (GAASGPAPGPGPAEEAGSEEAGPAGEP) are compositionally biased toward low complexity. 2 positions are modified to phosphoserine: serine 146 and serine 161. The involved in subunit assembly stretch occupies residues 158 to 209 (SQASFMQRQFGALLQPGVNKFSLRMFGSQKAVEREQERVKSAGAWIIHPYSD). The chain crosses the membrane as a helical span at residues 216-236 (FTMLLFMVGNLIIIPVGITFF). Topologically, residues 237–240 (KDET) are extracellular. Residues 241–261 (TAPWIVFNVVSDTFFLMDLVL) form a helical membrane-spanning segment. Over 262–288 (NFRTGIVIEDNTEIILDPEKIKKKYLR) the chain is Cytoplasmic. The chain crosses the membrane as a helical span at residues 289-309 (TWFVVDFVSSIPVDYIFLIVE). The Extracellular segment spans residues 310–317 (KGIDSEVY). Residues 318–338 (KTARALRIVRFTKILSLLRLL) form a helical; Voltage-sensor membrane-spanning segment. Residues 339–369 (RLSRLIRYIHQWEEIFHMTYDLASAVMRICN) are Cytoplasmic-facing. The chain crosses the membrane as a helical span at residues 370–390 (LISMMLLLCHWDGCLQFLVPM). Topologically, residues 391 to 413 (LQDFPRNCWVSINGMVNHSWSEL) are extracellular. Residue asparagine 407 is glycosylated (N-linked (GlcNAc...) asparagine). The segment at residues 414–435 (YSFALFKAMSHMLCIGYGRQAP) is an intramembrane region (pore-forming). The Extracellular segment spans residues 436–440 (ESMTD). The chain crosses the membrane as a helical span at residues 441–461 (IWLTMLSMIVGATCYAMFIGH). The Cytoplasmic portion of the chain corresponds to 462–889 (ATALIQSLDS…SARSRLSSNL (428 aa)). The 3',5'-cyclic AMP site is built by methionine 599, glycine 608, glutamate 609, isoleucine 610, cysteine 611, arginine 618, threonine 619, and arginine 659. A Phosphoserine; by PKG/PRKG2 modification is found at serine 668. Position 754 is a phosphoserine (serine 754). Residues 754–889 (SPRLVRRPPP…SARSRLSSNL (136 aa)) are disordered. Arginine 756 carries the omega-N-methylarginine modification. The segment covering 760–784 (RPPPGPAPAAASPGPPPPASPPGAP) has biased composition (pro residues). A phosphoserine mark is found at serine 771, serine 779, serine 786, serine 866, and serine 868. Residues 785–860 (ASPRAPRTSP…TPAARAAAPS (76 aa)) show a composition bias toward low complexity.

The protein belongs to the potassium channel HCN family. Homotetramer. The channel is composed of a homo- or heterotetrameric complex of pore-forming subunits. Heterotetramer with HCN1. Forms an obligate 4:4 complex with accessory subunit PEX5L. Interacts with KCNE2. In terms of processing, phosphorylation at Ser-668 by PRKG2 shifts the voltage-dependence to more negative voltages, hence counteracting the stimulatory effect of cGMP on gating. Post-translationally, S-palmitoylated. N-glycosylated; required for cell surface trafficking of HCN2. Highly expressed throughout the brain. Detected at low levels in heart.

The protein resides in the cell membrane. It carries out the reaction Na(+)(in) = Na(+)(out). It catalyses the reaction K(+)(in) = K(+)(out). The enzyme catalyses NH4(+)(in) = NH4(+)(out). With respect to regulation, activated by cAMP, and at 10-100 times higher concentrations, also by cGMP. cAMP binding causes a conformation change that leads to the assembly of an active tetramer and channel opening. Binding of cAMP removes a tonic inhibition conferred by cyclic nucleotide-binding domain (CNBD) on channel opening. Channel activity is modulated by intracellular chloride ions and pH; acidic pH shifts the activation to more negative voltages. Inhibited by extracellular cesium ions. Hyperpolarization-activated ion channel that is permeable to sodium and potassium ions. Displays lower selectivity for K(+) over Na(+) ions. Contributes to the native pacemaker currents in heart (If) and in neurons (Ih). Can also transport ammonium in the distal nephron. Involved in the initiation of neuropathic pain in sensory neurons. In Homo sapiens (Human), this protein is Potassium/sodium hyperpolarization-activated cyclic nucleotide-gated channel 2.